The primary structure comprises 935 residues: Probable mediator of RNA polymerase II transcription subunit 15c (935 aa).

Residues Met-1–Gly-13 are compositionally biased toward polar residues. 5 disordered regions span residues Met-1–Gln-28, Asn-170–Ser-190, Ser-495–Gln-526, Gln-548–Gly-611, and Ser-635–Pro-654. Residues Met-511 to Gln-526 are compositionally biased toward low complexity. Polar residues-rich tracts occupy residues Gln-548–Leu-577 and Ser-635–Thr-644.

It belongs to the plant Mediator complex subunit 15 family. As to quaternary structure, component of the Mediator complex.

The protein resides in the nucleus. Functionally, component of the Mediator complex, a coactivator involved in the regulated transcription of nearly all RNA polymerase II-dependent genes. Mediator functions as a bridge to convey information from gene-specific regulatory proteins to the basal RNA polymerase II transcription machinery. The Mediator complex, having a compact conformation in its free form, is recruited to promoters by direct interactions with regulatory proteins and serves for the assembly of a functional preinitiation complex with RNA polymerase II and the general transcription factors. The protein is Probable mediator of RNA polymerase II transcription subunit 15c (MED15C) of Arabidopsis thaliana (Mouse-ear cress).